The following is a 424-amino-acid chain: QQRYLNAKRYVKLAIVADRSMVTKHNGKLKKLRKWIYRIVNTINEVYRSLNILVALVYLEIWSKEDLINVTSAAKDTLASFGNWRATDLLKRRSHDAAHLLTNIKFDGTTVGKAYVASMCQQDSSVGINQDHSKINLLVALTMAHELGHNLGMSHDVVNTEKQCNCGTCVMAPTISDQISKLFSNCSKNDYENFLTLYKPQCILNEPSKTDIVSPPVCGNELLEVGEECDCGSPETCQNPCCDAATCKLTSGSQCAKGLCCDQCKFSKSGTECRAAKDDCDIAESCTGQSADCPTDDLQRNGQPCGNNAQYCRKGKCPIMTNQCISFYGPNAAVAPDACFDYNLKGEGNFYCRKEQATIFPCAQKDKKCGRLFCVLGPTGKRISCEHTYSQDDPDIGMVLPGTKCADGKVCNSNRECVDVNTAY.

A Pyrrolidone carboxylic acid modification is found at Gln1. One can recognise a Peptidase M12B domain in the interval 9–207 (RYVKLAIVAD…YKPQCILNEP (199 aa)). Asn69 carries an N-linked (GlcNAc...) asparagine glycan. Asp96 contacts Ca(2+). 3 cysteine pairs are disulfide-bonded: Cys120–Cys202, Cys164–Cys186, and Cys166–Cys169. Zn(2+) is bound at residue His145. The active site involves Glu146. Residues His149 and His155 each coordinate Zn(2+). N-linked (GlcNAc...) asparagine glycosylation is present at Asn185. Ca(2+)-binding residues include Cys202, Asn205, Val217, Asn220, Leu222, Glu224, Glu227, and Asp230. The Disintegrin domain occupies 215 to 301 (PPVCGNELLE…DCPTDDLQRN (87 aa)). Disulfide bonds link Cys218-Cys247, Cys229-Cys242, Cys231-Cys237, Cys241-Cys264, Cys255-Cys261, Cys260-Cys286, Cys273-Cys293, Cys280-Cys312, Cys305-Cys317, Cys324-Cys374, Cys339-Cys385, Cys352-Cys362, Cys369-Cys411, and Cys405-Cys417. The short motif at 279 to 281 (DCD) is the D/ECD-tripeptide element. Residues Asp281, Glu284, and Asp296 each coordinate Ca(2+).

It belongs to the venom metalloproteinase (M12B) family. P-III subfamily. P-IIIa sub-subfamily. As to quaternary structure, monomer. Zn(2+) serves as cofactor. Post-translationally, glycosylated. In terms of tissue distribution, expressed by the venom gland.

It localises to the secreted. With respect to regulation, its proteolytic activity is inhibited by EDTA, TPEN, 1,10-phenanthroline, and some thiol compounds, but is enhanced by alkaline earth metal ions (Mg2+, Ca2+, Sr2+, and Ba2+). Its activity is not modulated by urea (4 M). Non-hemorrhagic metalloproteinase that degrades fibrinogen. The alpha chain (FGA) is rapidly degraded, the beta chain (FGB) is degraded very slowly, while the gamma chain is left intact. Shows a prefential cleavage at X-Leu bonds. Cleaves insulin B chain at '29-His-|-Leu-30', '33-Ser-|-His-34', '38-Ala-|-Leu-39' and '40-Tyr-|-Leu-41' bonds. This Gloydius brevicauda (Korean slamosa snake) protein is Zinc metalloproteinase-disintegrin-like brevilysin H2b.